Here is a 228-residue protein sequence, read N- to C-terminus: Protein Thf1 (228 aa).

Positions 201–223 (IKRSKEVVDELSQTERRKREERA) form a coiled coil. The interval 209-228 (DELSQTERRKREERAVSQPG) is disordered.

The protein belongs to the THF1 family.

In terms of biological role, may be involved in photosynthetic membrane biogenesis. This Gloeobacter violaceus (strain ATCC 29082 / PCC 7421) protein is Protein Thf1.